The sequence spans 364 residues: tRNA 2-selenouridine synthase (364 aa).

One can recognise a Rhodanese domain in the interval 14–137; that stretch reads LLADTPLIDV…LRQTAIQATW (124 aa). C97 functions as the S-selanylcysteine intermediate in the catalytic mechanism.

It belongs to the SelU family. In terms of assembly, monomer.

It carries out the reaction 5-methylaminomethyl-2-thiouridine(34) in tRNA + selenophosphate + (2E)-geranyl diphosphate + H2O + H(+) = 5-methylaminomethyl-2-selenouridine(34) in tRNA + (2E)-thiogeraniol + phosphate + diphosphate. The enzyme catalyses 5-methylaminomethyl-2-thiouridine(34) in tRNA + (2E)-geranyl diphosphate = 5-methylaminomethyl-S-(2E)-geranyl-thiouridine(34) in tRNA + diphosphate. The catalysed reaction is 5-methylaminomethyl-S-(2E)-geranyl-thiouridine(34) in tRNA + selenophosphate + H(+) = 5-methylaminomethyl-2-(Se-phospho)selenouridine(34) in tRNA + (2E)-thiogeraniol. It catalyses the reaction 5-methylaminomethyl-2-(Se-phospho)selenouridine(34) in tRNA + H2O = 5-methylaminomethyl-2-selenouridine(34) in tRNA + phosphate. Involved in the post-transcriptional modification of the uridine at the wobble position (U34) of tRNA(Lys), tRNA(Glu) and tRNA(Gln). Catalyzes the conversion of 2-thiouridine (S2U-RNA) to 2-selenouridine (Se2U-RNA). Acts in a two-step process involving geranylation of 2-thiouridine (S2U) to S-geranyl-2-thiouridine (geS2U) and subsequent selenation of the latter derivative to 2-selenouridine (Se2U) in the tRNA chain. The polypeptide is tRNA 2-selenouridine synthase (Salmonella agona (strain SL483)).